The following is a 211-amino-acid chain: MLSIDKHLPAPHGLAAVLVRRAPKLVLPFLARSRSRLRATLDDGREVAVVLPRGTVMRGGDVLVAEDGTLVEVQAAPEQVLRVTSDSRLALMRAAYHLGNRHTPVQVVADALQLEADPVLEDMLVRLGVTVTHVQAPFEPEAGAYGGGHRHGHDATFEEDYAAAQALYREHHGHSHDRGCDHSHSHSHDHDHDHGHVHGPGCGHAPHHRHD.

Positions 170–211 (EHHGHSHDRGCDHSHSHSHDHDHDHGHVHGPGCGHAPHHRHD) are disordered. Residues 176-196 (HDRGCDHSHSHSHDHDHDHGH) show a composition bias toward basic and acidic residues.

This sequence belongs to the UreE family.

It is found in the cytoplasm. Functionally, involved in urease metallocenter assembly. Binds nickel. Probably functions as a nickel donor during metallocenter assembly. The polypeptide is Urease accessory protein UreE (Ralstonia nicotianae (strain ATCC BAA-1114 / GMI1000) (Ralstonia solanacearum)).